The following is a 337-amino-acid chain: Meiotic driver wtf4 (337 aa).

The segment covering 1 to 29 (MKNKDYPLRSSMDELSTKNDNEIDLEKGP) has biased composition (basic and acidic residues). Positions 1–40 (MKNKDYPLRSSMDELSTKNDNEIDLEKGPLPEYNSEDEST) are disordered. The next 6 membrane-spanning stretches (helical) occupy residues 89-109 (LLIS…CVNP), 119-139 (AFFV…FCFF), 149-169 (CIKV…VGLY), 176-196 (VVII…RSKF), 210-230 (CSIS…FWTL), and 234-254 (FSGL…TKGL).

Belongs to the WTF family. Homomer. Forms protein aggregates. The two isoforms can interact with each other and with themselves. High sequence similarity is required for their interaction.

It is found in the spore membrane. Its subcellular location is the vacuole membrane. The protein localises to the ascus epiplasm. It localises to the cytoplasm. The protein resides in the endoplasmic reticulum membrane. Functionally, promotes unequal transmission of alleles from the parental zygote to progeny spores by acting as poison/antidote system where the poison and antidote proteins are produced from the same locus; the poison component is trans-acting and targets all spores within an ascus whereas the antidote component is spore-specific, leading to poisoning of all progeny that do not inherit the allele. Its function is as follows. Localizes isoform 2 to the vacuole thereby facilitating its degradation. In terms of biological role, forms toxic aggregates that disrupt spore maturation. This is Meiotic driver wtf4 from Schizosaccharomyces kambucha (Fission yeast).